A 117-amino-acid chain; its full sequence is uncharacterized protein (117 aa).

2 helical membrane passes run 9 to 29 and 56 to 76; these read ITSH…FIPF and VIIV…FFIP.

It localises to the membrane. This is an uncharacterized protein from Saccharomyces cerevisiae (strain ATCC 204508 / S288c) (Baker's yeast).